We begin with the raw amino-acid sequence, 212 residues long: Dephospho-CoA kinase (212 aa).

Positions 6–211 (RLGLTGGIGS…LSCQPLSPNQ (206 aa)) constitute a DPCK domain. An ATP-binding site is contributed by 14–19 (GSGKST).

The protein belongs to the CoaE family.

It localises to the cytoplasm. It carries out the reaction 3'-dephospho-CoA + ATP = ADP + CoA + H(+). Its pathway is cofactor biosynthesis; coenzyme A biosynthesis; CoA from (R)-pantothenate: step 5/5. Catalyzes the phosphorylation of the 3'-hydroxyl group of dephosphocoenzyme A to form coenzyme A. The polypeptide is Dephospho-CoA kinase (Albidiferax ferrireducens (strain ATCC BAA-621 / DSM 15236 / T118) (Rhodoferax ferrireducens)).